Here is a 554-residue protein sequence, read N- to C-terminus: DM7 family protein GG17593 (554 aa).

Belongs to the DM7 family.

In Drosophila erecta (Fruit fly), this protein is DM7 family protein GG17593.